We begin with the raw amino-acid sequence, 512 residues long: MSLLATVLLLWGFTLGPGNTLMLDSGSEPKLWAEPQSLLEPWANLTLVCAVDLPTKVFELIQNGWFLSQVRLETQVLSYRFSLGAITSNNSGIYRCRCGVEPPVDIHLPALNKWTMLSNAVEVTGKEPLPRPLAHADPVDWITPGGLPVYVMCQVAMRGVTYLLRQEGVDGVQKPDVQHKGTAGFLIYKPGNYSCSYLTHAAGEPSEPSDIVTIKMYASQAPPTLCLMGNYLMIYPQKTYETLACKAPRNAAEFQLRQGGKVLKIHGFSPTRDAILYYVNLKELDNPGPFTCRYRMHKYMHVWSEDSKPVELMWSDETLQAPVLTAEPSSRDLEPGSTVQLRCTAPVSGLRFGLQRQGKPELVVVQMLNSSGTEAVFELHNISTIDSGNYSCIYMEQAPPFSGSSSSEPVELRVNGPPPKPRLEALWKSTVHLGQEAIFRCHGHVPRVSMELVREGFKTPFAVASTRSTSAYLKLLFVGPQHAGNYSCRYTALPPFTFESGISDPVEVIVEG.

The signal sequence occupies residues 1 to 18; that stretch reads MSLLATVLLLWGFTLGPG. 5 Ig-like V-type domains span residues 22–126, 127–219, 220–312, 313–415, and 416–512; these read MLDS…VTGK, EPLP…MYAS, QAPP…PVEL, MWSD…LRVN, and GPPP…IVEG. N-linked (GlcNAc...) asparagine glycans are attached at residues Asn-44, Asn-89, and Asn-192. Cystine bridges form between Cys-49/Cys-96, Cys-153/Cys-195, Cys-245/Cys-292, Cys-343/Cys-392, and Cys-441/Cys-488. 4 N-linked (GlcNAc...) asparagine glycosylation sites follow: Asn-369, Asn-381, Asn-389, and Asn-485.

As to quaternary structure, interacts with CRISP3. In terms of tissue distribution, expressed in the liver hepatocytes of male and female GH transgenic mice and in the liver of female, but not of male, non-transgenic mice.

The protein localises to the secreted. This Mus musculus (Mouse) protein is Alpha-1B-glycoprotein (A1bg).